The sequence spans 251 residues: Imidazole glycerol phosphate synthase subunit HisF (251 aa).

Residues Asp12 and Asp131 contribute to the active site.

This sequence belongs to the HisA/HisF family. In terms of assembly, heterodimer of HisH and HisF.

The protein localises to the cytoplasm. The enzyme catalyses 5-[(5-phospho-1-deoxy-D-ribulos-1-ylimino)methylamino]-1-(5-phospho-beta-D-ribosyl)imidazole-4-carboxamide + L-glutamine = D-erythro-1-(imidazol-4-yl)glycerol 3-phosphate + 5-amino-1-(5-phospho-beta-D-ribosyl)imidazole-4-carboxamide + L-glutamate + H(+). Its pathway is amino-acid biosynthesis; L-histidine biosynthesis; L-histidine from 5-phospho-alpha-D-ribose 1-diphosphate: step 5/9. IGPS catalyzes the conversion of PRFAR and glutamine to IGP, AICAR and glutamate. The HisF subunit catalyzes the cyclization activity that produces IGP and AICAR from PRFAR using the ammonia provided by the HisH subunit. In Helicobacter hepaticus (strain ATCC 51449 / 3B1), this protein is Imidazole glycerol phosphate synthase subunit HisF.